Reading from the N-terminus, the 379-residue chain is Putative FBD-associated F-box protein At5g38570 (379 aa).

One can recognise an F-box domain in the interval 1–47; it reads MDNINGLPDDLLVKILSFVPTYVAVSTCVLSKRWEFLWMWLPNLEFV. In terms of domain architecture, FBD spans 295-345; that stretch reads CWNQPSSVLECLLSSLKILNWSAYFGRPQDRDIAVYILKNACHLKTATFLT.

The chain is Putative FBD-associated F-box protein At5g38570 from Arabidopsis thaliana (Mouse-ear cress).